The chain runs to 172 residues: Avenin-like a4 (172 aa).

A signal peptide spans 1–19 (MKTMFILALIALAATSVVA).

Belongs to the prolamin family. Contains 7 disulfide bonds.

Functionally, seed storage protein. Not integrated in the gluten polymer through disulfide bonds, unless incorporated by reduction and reoxidation during dough making. Increases dough strength and bread volume, but decreases dough stability when added into a base wheat flour. In Triticum aestivum (Wheat), this protein is Avenin-like a4.